The following is a 224-amino-acid chain: Voltage-dependent calcium channel gamma-1 subunit (224 aa).

Residues 1-10 lie on the Cytoplasmic side of the membrane; that stretch reads MSQTKALKVR. The chain crosses the membrane as a helical span at residues 11 to 29; sequence VTLFCILVGIVLALVAVVT. Topologically, residues 30-110 are extracellular; the sequence is DHWAVLSPHV…TQKEYSISAA (81 aa). N-linked (GlcNAc...) asparagine glycosylation is found at N43 and N81. A disulfide bond links C57 and C82. The helical transmembrane segment at 111 to 131 threads the bilayer; sequence AIAIFSLGFIILGTICGLLSF. Residues 132–136 lie on the Cytoplasmic side of the membrane; sequence RKKRD. The chain crosses the membrane as a helical span at residues 137 to 157; sequence YLLRPASMFYAFAGLCIFVSV. The Extracellular segment spans residues 158–181; the sequence is EVMRQSVKRMIDSEDTVWIDYYYG. Residues 182–206 form a helical membrane-spanning segment; it reads WSFACACAAFILLFLGGIALLLFSL. The Cytoplasmic segment spans residues 207 to 224; the sequence is PRMPQYPWESCMDAEPEH.

Belongs to the PMP-22/EMP/MP20 family. CACNG subfamily. In terms of assembly, component of a calcium channel complex consisting of a pore-forming alpha subunit (CACNA1S) and the ancillary subunits CACNB1 or CACNB2, CACNG1 and CACNA2D1. The channel complex contains alpha, beta, gamma and delta subunits in a 1:1:1:1 ratio, i.e. it contains either CACNB1 or CACNB2. Post-translationally, N-glycosylated.

The protein localises to the cell membrane. It is found in the sarcolemma. Regulatory subunit of the voltage-gated calcium channel that gives rise to L-type calcium currents in skeletal muscle. Regulates channel inactivation kinetics. The protein is Voltage-dependent calcium channel gamma-1 subunit (CACNG1) of Sus scrofa (Pig).